The following is a 329-amino-acid chain: Olfactory receptor 5AL1 (329 aa).

Residues 1–44 (MCALKGFLEENFYTYSVAKGNHSTVYEFILLGLTDNAELQVTLF) lie on the Extracellular side of the membrane. N21 carries an N-linked (GlcNAc...) asparagine glycan. The helical transmembrane segment at 45-65 (GIFLVVYLASFMGNFGLIMLI) threads the bilayer. Topologically, residues 66 to 73 (QISPQLHT) are cytoplasmic. Residues 74 to 94 (PMYFFLSHLAFVDFSFTSSVA) traverse the membrane as a helical segment. At 95–113 (PNTLVNFLCEVKSITFYAC) the chain is on the extracellular side. The cysteines at positions 113 and 205 are disulfide-linked. The chain crosses the membrane as a helical span at residues 114–134 (AIQVCCFITFVVCELYLLSIM). The Cytoplasmic portion of the chain corresponds to 135 to 157 (AYDRYVAICNPLLYVILIPRKLC). A helical membrane pass occupies residues 158–178 (IKLIASTYVYGFTVGLVQTVA). At 179–220 (TSYLSFCDSNVINHFYHDDVPLVALACSDTHVKELMLLIIAG) the chain is on the extracellular side. A helical membrane pass occupies residues 221-241 (FNTLCSLVIVLISYGFIFFAI). The Cytoplasmic portion of the chain corresponds to 242–253 (LRIHSAEGRQKA). Residues 254 to 274 (FSTSASHLTSITIFYGTIIFM) traverse the membrane as a helical segment. The Extracellular segment spans residues 275-287 (YPQPKSSHSLNMD). The helical transmembrane segment at 288–308 (KVASVFNVVVIPTLNPLIYSL) threads the bilayer. Over 309–329 (RNQEVKNALKRIIEKLCLAVK) the chain is Cytoplasmic.

This sequence belongs to the G-protein coupled receptor 1 family.

The protein localises to the cell membrane. Its function is as follows. Odorant receptor. The chain is Olfactory receptor 5AL1 (OR5AL1) from Homo sapiens (Human).